The chain runs to 392 residues: Formate-dependent phosphoribosylglycinamide formyltransferase (392 aa).

Residues 22 to 23 (EL) and E82 each bind N(1)-(5-phospho-beta-D-ribosyl)glycinamide. Residues R114, K155, 160-165 (SSGKGQ), 195-198 (EGLV), and E203 each bind ATP. One can recognise an ATP-grasp domain in the interval 119–308 (RLAAETLGVP…EFALHVRAFL (190 aa)). 2 residues coordinate Mg(2+): E267 and E279. N(1)-(5-phospho-beta-D-ribosyl)glycinamide is bound by residues D286, K355, and 362–363 (RR).

Belongs to the PurK/PurT family. In terms of assembly, homodimer.

It carries out the reaction N(1)-(5-phospho-beta-D-ribosyl)glycinamide + formate + ATP = N(2)-formyl-N(1)-(5-phospho-beta-D-ribosyl)glycinamide + ADP + phosphate + H(+). The protein operates within purine metabolism; IMP biosynthesis via de novo pathway; N(2)-formyl-N(1)-(5-phospho-D-ribosyl)glycinamide from N(1)-(5-phospho-D-ribosyl)glycinamide (formate route): step 1/1. Functionally, involved in the de novo purine biosynthesis. Catalyzes the transfer of formate to 5-phospho-ribosyl-glycinamide (GAR), producing 5-phospho-ribosyl-N-formylglycinamide (FGAR). Formate is provided by PurU via hydrolysis of 10-formyl-tetrahydrofolate. The sequence is that of Formate-dependent phosphoribosylglycinamide formyltransferase from Pectobacterium carotovorum subsp. carotovorum (strain PC1).